The primary structure comprises 582 residues: 15-cis-phytoene desaturase, chloroplastic/chromoplastic (582 aa).

The transit peptide at 1 to 110 directs the protein to the chloroplast and chromoplast; sequence MPQIGLVSAV…FRSSPRPTKP (110 aa). FAD is bound by residues 140–141, lysine 148, 165–166, and tyrosine 171; these read EA and HI. Substrate is bound at residue arginine 306. FAD-binding residues include isoleucine 348 and aspartate 537. Alanine 545 is a binding site for substrate. Residue methionine 547 participates in FAD binding.

The protein belongs to the carotenoid/retinoid oxidoreductase family. Homotetramer. FAD is required as a cofactor.

The protein localises to the plastid. The protein resides in the chloroplast. Its subcellular location is the chromoplast. It localises to the membrane. It carries out the reaction 2 a plastoquinone + 15-cis-phytoene = 9,9',15-tri-cis-zeta-carotene + 2 a plastoquinol. It functions in the pathway carotenoid biosynthesis; lycopene biosynthesis. With respect to regulation, inhibited by the herbicides metflurazon, difunone, fluridone and diflufenican. Its function is as follows. Converts phytoene into zeta-carotene via the intermediary of phytofluene by the symmetrical introduction of two double bonds at the C-11 and C-11' positions of phytoene with a concomitant isomerization of two neighboring double bonds at the C9 and C9' positions from trans to cis. In Capsicum annuum (Capsicum pepper), this protein is 15-cis-phytoene desaturase, chloroplastic/chromoplastic (PDS).